A 158-amino-acid polypeptide reads, in one-letter code: AP-1 complex subunit sigma-1A (158 aa).

The residue at position 147 (S147) is a Phosphoserine.

Belongs to the adaptor complexes small subunit family. Adaptor protein complex 1 (AP-1) is a heterotetramer composed of two large adaptins (gamma-type subunit AP1G1 and beta-type subunit AP1B1), a medium adaptin (mu-type subunit AP1M1 or AP1M2) and a small adaptin (sigma-type subunit AP1S1 or AP1S2 or AP1S3). In terms of tissue distribution, widely expressed.

It is found in the golgi apparatus. It localises to the cytoplasmic vesicle membrane. Its subcellular location is the membrane. The protein resides in the clathrin-coated pit. Its function is as follows. Subunit of clathrin-associated adaptor protein complex 1 that plays a role in protein sorting in the late-Golgi/trans-Golgi network (TGN) and/or endosomes. The AP complexes mediate both the recruitment of clathrin to membranes and the recognition of sorting signals within the cytosolic tails of transmembrane cargo molecules. The chain is AP-1 complex subunit sigma-1A (AP1S1) from Homo sapiens (Human).